A 151-amino-acid polypeptide reads, in one-letter code: MHALQAKILDPRLGSEFPLPQYATPGSAGLDLRALLKEDTVLEPGQTLLIPTGLSIYIGDPGLAAMILPRSGLGHKHGIVLGNLVGLIDSDYQGELMVSCWNRGNTPFTIAVGERIAQLVLVPVVQAHFEVVEAFDESQRGTGGFGHSGSH.

Substrate contacts are provided by residues 70-72 (RSG), Asn83, 87-89 (LID), and Met97.

The protein belongs to the dUTPase family. It depends on Mg(2+) as a cofactor.

It carries out the reaction dUTP + H2O = dUMP + diphosphate + H(+). It functions in the pathway pyrimidine metabolism; dUMP biosynthesis; dUMP from dCTP (dUTP route): step 2/2. Its function is as follows. This enzyme is involved in nucleotide metabolism: it produces dUMP, the immediate precursor of thymidine nucleotides and it decreases the intracellular concentration of dUTP so that uracil cannot be incorporated into DNA. This chain is Deoxyuridine 5'-triphosphate nucleotidohydrolase, found in Pseudomonas putida (strain W619).